Consider the following 239-residue polypeptide: Tetraspanin-9 (239 aa).

Residues 1–13 (MARGCLCCLKYMM) are Cytoplasmic-facing. Residues 14 to 34 (FLFNLIFWLCGCGLLGVGIWL) form a helical membrane-spanning segment. The Extracellular segment spans residues 35-55 (SVSQGNFATFSPSFPSLSAAN). The chain crosses the membrane as a helical span at residues 56–76 (LVIAIGTIVMVTGFLGCLGAI). The Cytoplasmic portion of the chain corresponds to 77–85 (KENRCLLLS). The helical transmembrane segment at 86–106 (FFIVLLIILLAELILIILFFV) threads the bilayer. Topologically, residues 107–203 (YMDKVNENAR…VKMWFDDNKH (97 aa)) are extracellular. An N-linked (GlcNAc...) asparagine glycan is attached at N180. Residues 204–224 (VLGTVGMCILIMQILGMAFSM) traverse the membrane as a helical segment. The Cytoplasmic portion of the chain corresponds to 225-239 (TLFQHIHRTGKKYDA).

Belongs to the tetraspanin (TM4SF) family. Found in a complex with GP6. Glycosylated.

The protein resides in the membrane. In Sus scrofa (Pig), this protein is Tetraspanin-9 (TSPAN9).